The primary structure comprises 601 residues: Sodium-dependent phosphate transport protein 2C (601 aa).

Residues 1–75 lie on the Cytoplasmic side of the membrane; it reads MPNSLAGGQV…RRVVSSFLKA (75 aa). Ser4 carries the post-translational modification Phosphoserine. A helical transmembrane segment spans residues 76 to 96; the sequence is CGLLGSLYFFICSLDILSSAF. Residues 97–110 are Extracellular-facing; it reads QLLGSKMAGDIFKD. The chain crosses the membrane as a helical span at residues 111–131; that stretch reads NVVLSNPVAGLVIGVLVTVLV. Over 132-187 the chain is Cytoplasmic; sequence QSSSTSSSIVVSMVASKLLTVQVSVPIIMGVNVGTSITSTLVSMAQSGDRDEFQRA. A helical membrane pass occupies residues 188-208; that stretch reads FSGSAVHGIFNWLTVLVLLPL. Residues 209 to 324 are Extracellular-facing; that stretch reads ESATAALERL…FAGSKLTDLA (116 aa). Asn264, Asn267, and Asn299 each carry an N-linked (GlcNAc...) asparagine glycan. Cys275 and Cys311 are oxidised to a cystine. The chain crosses the membrane as a helical span at residues 325–345; that stretch reads VGFILLAGSLLVLCVCLVLIV. Residues 346–369 lie on the Cytoplasmic side of the membrane; that stretch reads KLLNSVLKGRIAQAVKTVINADFP. Residues 370 to 390 form a helical membrane-spanning segment; sequence FPFGWLSGYLAILVGAGLTFL. Residues 391–441 are Extracellular-facing; it reads LQSSSVFTAAIVPLMGVGVIDLERAYPLFLGSNIGTTTTALLAALASPADM. Residues 442–462 traverse the membrane as a helical segment; the sequence is LIFAVQVALIHFFFNLAGILL. The Cytoplasmic segment spans residues 463-487; the sequence is WYLVPVLRLPIPLAKRFGNLTAQYR. Residues 488–508 traverse the membrane as a helical segment; the sequence is WVAIVYLLLTFLLLPLAAFGL. Residues 509–512 lie on the Extracellular side of the membrane; sequence SLAG. The chain crosses the membrane as a helical span at residues 513–533; that stretch reads GTVLAAVGGPLVGLVLLIILV. The Cytoplasmic portion of the chain corresponds to 534–601; sequence NVLQQHRPSW…NPQVIASQQL (68 aa).

Belongs to the SLC34A transporter family. In terms of tissue distribution, expressed only in the kidney.

It localises to the apical cell membrane. It carries out the reaction 2 Na(+)(out) + phosphate(out) = 2 Na(+)(in) + phosphate(in). In terms of biological role, involved in actively transporting phosphate into cells via Na(+) cotransport in the renal brush border membrane. The cotransport has a Na(+):Pi stoichiometry of 2:1 and is electroneutral. In Mus musculus (Mouse), this protein is Sodium-dependent phosphate transport protein 2C (Slc34a3).